We begin with the raw amino-acid sequence, 245 residues long: LKDGTGIVAAELVAIEKGCEELLSRRKSGWIVTDSEGAIGALRKWKSEDRVTQDIKRAIWQGEREAIDITIRIRGPKTETQEADRAAKKARDRPQVDLETYCNKAEVRQKFREKELTKWQSEWGKRNHRREHIGFPAVTDEWPGLNERAVQLVTGHGYFKAYYRRFKLREGSGLCECGEAEETADHVWWECTVEERERARREFTEAVGTRADVRQKLSEVHRDRLISELNKLADAIVRDDSNLEQ.

A Reverse transcriptase domain is found at Leu1 to Ala105. The segment at Glu106 to Gln245 is nucleic acid-binding endonuclease.

It carries out the reaction DNA(n) + a 2'-deoxyribonucleoside 5'-triphosphate = DNA(n+1) + diphosphate. In Popillia japonica (Japanese beetle), this protein is Retrovirus-related Pol polyprotein from type-1 retrotransposable element R1.